Reading from the N-terminus, the 214-residue chain is ATP-dependent Clp protease proteolytic subunit 3 (214 aa).

Residue Ser106 is the Nucleophile of the active site. His131 is an active-site residue.

This sequence belongs to the peptidase S14 family. Fourteen ClpP subunits assemble into 2 heptameric rings which stack back to back to give a disk-like structure with a central cavity, resembling the structure of eukaryotic proteasomes.

The protein resides in the cytoplasm. It catalyses the reaction Hydrolysis of proteins to small peptides in the presence of ATP and magnesium. alpha-casein is the usual test substrate. In the absence of ATP, only oligopeptides shorter than five residues are hydrolyzed (such as succinyl-Leu-Tyr-|-NHMec, and Leu-Tyr-Leu-|-Tyr-Trp, in which cleavage of the -Tyr-|-Leu- and -Tyr-|-Trp bonds also occurs).. Its function is as follows. Cleaves peptides in various proteins in a process that requires ATP hydrolysis. Has a chymotrypsin-like activity. Plays a major role in the degradation of misfolded proteins. This Trichormus variabilis (strain ATCC 29413 / PCC 7937) (Anabaena variabilis) protein is ATP-dependent Clp protease proteolytic subunit 3.